We begin with the raw amino-acid sequence, 273 residues long: Probable branched-chain-amino-acid aminotransferase (273 aa).

N6-(pyridoxal phosphate)lysine is present on K133.

Belongs to the class-IV pyridoxal-phosphate-dependent aminotransferase family. It depends on pyridoxal 5'-phosphate as a cofactor.

It catalyses the reaction L-leucine + 2-oxoglutarate = 4-methyl-2-oxopentanoate + L-glutamate. The enzyme catalyses L-isoleucine + 2-oxoglutarate = (S)-3-methyl-2-oxopentanoate + L-glutamate. The catalysed reaction is L-valine + 2-oxoglutarate = 3-methyl-2-oxobutanoate + L-glutamate. Its pathway is amino-acid biosynthesis; L-isoleucine biosynthesis; L-isoleucine from 2-oxobutanoate: step 4/4. It functions in the pathway amino-acid biosynthesis; L-leucine biosynthesis; L-leucine from 3-methyl-2-oxobutanoate: step 4/4. The protein operates within amino-acid biosynthesis; L-valine biosynthesis; L-valine from pyruvate: step 4/4. Acts on leucine, isoleucine and valine. The chain is Probable branched-chain-amino-acid aminotransferase (ilvE) from Thermotoga maritima (strain ATCC 43589 / DSM 3109 / JCM 10099 / NBRC 100826 / MSB8).